The chain runs to 358 residues: Phospho-N-acetylmuramoyl-pentapeptide-transferase (358 aa).

A run of 10 helical transmembrane segments spans residues 13-47 (LFIL…SIFI), 81-101 (MGGI…TINL), 106-126 (LILL…DDYL), 148-168 (ISII…LITI), 171-191 (SWAI…LVGI), 201-221 (LDGL…TEIL), 228-248 (LFVF…FLKY), 255-275 (IFMG…IALL), 278-298 (SIFT…SVII), and 336-356 (IVEN…VLKI).

The protein belongs to the glycosyltransferase 4 family. MraY subfamily. The cofactor is Mg(2+).

The protein resides in the cell inner membrane. It carries out the reaction UDP-N-acetyl-alpha-D-muramoyl-L-alanyl-gamma-D-glutamyl-meso-2,6-diaminopimeloyl-D-alanyl-D-alanine + di-trans,octa-cis-undecaprenyl phosphate = di-trans,octa-cis-undecaprenyl diphospho-N-acetyl-alpha-D-muramoyl-L-alanyl-D-glutamyl-meso-2,6-diaminopimeloyl-D-alanyl-D-alanine + UMP. Its pathway is cell wall biogenesis; peptidoglycan biosynthesis. Functionally, catalyzes the initial step of the lipid cycle reactions in the biosynthesis of the cell wall peptidoglycan: transfers peptidoglycan precursor phospho-MurNAc-pentapeptide from UDP-MurNAc-pentapeptide onto the lipid carrier undecaprenyl phosphate, yielding undecaprenyl-pyrophosphoryl-MurNAc-pentapeptide, known as lipid I. The protein is Phospho-N-acetylmuramoyl-pentapeptide-transferase of Prochlorococcus marinus (strain MIT 9301).